A 189-amino-acid chain; its full sequence is Small ribosomal subunit protein uS4 (189 aa).

The S4 RNA-binding domain occupies 107-181 (RRLQTQVFKL…VKRRTLRKGD (75 aa)). A disordered region spans residues 161–189 (QSPYGGGRPGRVKRRTLRKGDGAGGDDEE).

The protein belongs to the universal ribosomal protein uS4 family. Component of the small ribosomal subunit. Part of the small subunit (SSU) processome, composed of more than 70 proteins and the RNA chaperone small nucleolar RNA (snoRNA) U3.

It localises to the cytoplasm. The protein localises to the nucleus. The protein resides in the nucleolus. Its function is as follows. Component of the small ribosomal subunit. The ribosome is a large ribonucleoprotein complex responsible for the synthesis of proteins in the cell. Part of the small subunit (SSU) processome, first precursor of the small eukaryotic ribosomal subunit. During the assembly of the SSU processome in the nucleolus, many ribosome biogenesis factors, an RNA chaperone and ribosomal proteins associate with the nascent pre-rRNA and work in concert to generate RNA folding, modifications, rearrangements and cleavage as well as targeted degradation of pre-ribosomal RNA by the RNA exosome. This Caenorhabditis elegans protein is Small ribosomal subunit protein uS4 (rps-9).